We begin with the raw amino-acid sequence, 636 residues long: Eisosome protein sle1 (636 aa).

The interval 1-297 is required for targeting the protein to eisosomes; the sequence is MSHASKNYNA…HVIIYENKEG (297 aa). Disordered stretches follow at residues 111 to 205, 222 to 284, 313 to 387, 400 to 451, 467 to 550, and 572 to 604; these read ANYM…SPAN, YSPS…VPPV, DPSG…TQHF, QYYQ…QPSL, DITP…VNNA, and PSNH…RFAN. Polar residues-rich tracts occupy residues 131–159, 166–178, 188–204, 237–255, and 315–354; these read PSQQ…QSYQ, RTSQ…NNYS, RRSS…GSPA, SYNN…TQKS, and SGSN…VVSR. Over residues 355-383 the composition is skewed to low complexity; sequence SGQNNNQPAQPGQYNQQSQPVQSYQSGQS. Polar residues-rich tracts occupy residues 400-412 and 422-439; these read QYYQ…QPVQ and PVQS…QPVQ. The segment covering 471–484 has biased composition (low complexity); that stretch reads TASSTTANNAYASA. Over residues 503-512 the composition is skewed to basic and acidic residues; the sequence is SFERERDSGR. The span at 572–589 shows a compositional bias: polar residues; it reads PSNHAYSEGRSYTFTGGQ.

In terms of assembly, component of eisosomes, large cytoplasmic protein assemblies that localize to specialized domains termed MCCs on the plasma membrane.

Its subcellular location is the cytoplasm. The protein localises to the cell cortex. The protein resides in the cell tip. Functionally, important for the biogenesis of filamentous eisosomes, large cytoplasmic protein assemblies that localize to specialized domains on the plasma membrane to cluster specific proteins at sites of membrane invaginations. This is Eisosome protein sle1 (sle1) from Schizosaccharomyces pombe (strain 972 / ATCC 24843) (Fission yeast).